The chain runs to 535 residues: T-complex protein 1 subunit epsilon (535 aa).

Belongs to the TCP-1 chaperonin family. Heterooligomeric complex of about 850 to 900 kDa that forms two stacked rings, 12 to 16 nm in diameter.

It is found in the cytoplasm. Functionally, molecular chaperone; assists the folding of proteins upon ATP hydrolysis. Known to play a role, in vitro, in the folding of actin and tubulin. This chain is T-complex protein 1 subunit epsilon, found in Arabidopsis thaliana (Mouse-ear cress).